Here is a 278-residue protein sequence, read N- to C-terminus: HTH-type transcriptional activator RhaS (278 aa).

An HTH araC/xylS-type domain is found at 174–272 (NLLLAWLEDH…NWSPRDIRQG (99 aa)). DNA-binding regions (H-T-H motif) lie at residues 191 to 212 (DAVADQFSLSLRTLHRQLKQQT) and 239 to 262 (VTDIAYRCGFSDSNHFSTLFRREF).

In terms of assembly, binds DNA as a dimer.

The protein resides in the cytoplasm. Its function is as follows. Activates expression of the rhaBAD and rhaT operons. In Shigella flexneri serotype 5b (strain 8401), this protein is HTH-type transcriptional activator RhaS.